A 572-amino-acid polypeptide reads, in one-letter code: Laccase-3 (572 aa).

The first 18 residues, Met-1–Leu-18, serve as a signal peptide directing secretion. 2 consecutive Plastocyanin-like domains span residues Thr-21–Tyr-145 and Ile-157–Glu-304. Positions 82, 84, 127, and 129 each coordinate Cu cation. Cys-103 and Cys-561 are disulfide-bonded. Asn-182, Asn-228, Asn-294, Asn-367, and Asn-405 each carry an N-linked (GlcNAc...) asparagine glycan. In terms of domain architecture, Plastocyanin-like 3 spans Asp-422–Ala-540. Positions 470, 473, 475, 522, 523, 524, and 528 each coordinate Cu cation.

Belongs to the multicopper oxidase family. As to quaternary structure, homodimer. Requires Cu cation as cofactor. As to expression, in mycelia, at a lower level than LCC4.

The protein localises to the secreted. The catalysed reaction is 4 hydroquinone + O2 = 4 benzosemiquinone + 2 H2O. Lignin degradation and detoxification of lignin-derived products. This Thanatephorus cucumeris (Black scurf of potato) protein is Laccase-3 (LCC3).